The chain runs to 886 residues: Phycobiliprotein ApcE (886 aa).

(2R,3E)-phycocyanobilin is bound at residue cysteine 187. 3 PBS-linker domains span residues 244-424, 496-678, and 695-876; these read DLQG…FRKV, QVRP…ISSK, and NDIQ…SVVV.

The protein belongs to the phycobilisome linker protein family. Contains one covalently linked bilin chromophore. This protein autochromophorylates (Potential).

Its subcellular location is the plastid. The protein resides in the chloroplast thylakoid membrane. This protein is postulated to act both as terminal energy acceptor and as a linker polypeptide that stabilizes the phycobilisome architecture. May have intrinsic bilin lyase activity. In Porphyra purpurea (Red seaweed), this protein is Phycobiliprotein ApcE (apcE).